The sequence spans 89 residues: Large ribosomal subunit protein bL27 (89 aa).

Residues 1-21 (MAHKKAGGSSRNGRDSESKRL) are disordered.

It belongs to the bacterial ribosomal protein bL27 family.

The sequence is that of Large ribosomal subunit protein bL27 from Bartonella quintana (strain Toulouse) (Rochalimaea quintana).